A 166-amino-acid chain; its full sequence is Regulator of ribonuclease activity A (166 aa).

The protein belongs to the RraA family. In terms of assembly, homotrimer. Binds to both RNA-binding sites in the C-terminal region of Rne and to RhlB.

It is found in the cytoplasm. Functionally, globally modulates RNA abundance by binding to RNase E (Rne) and regulating its endonucleolytic activity. Can modulate Rne action in a substrate-dependent manner by altering the composition of the degradosome. Modulates RNA-binding and helicase activities of the degradosome. The protein is Regulator of ribonuclease activity A of Glaesserella parasuis serovar 5 (strain SH0165) (Haemophilus parasuis).